The sequence spans 147 residues: Large ribosomal subunit protein uL13 (147 aa).

Belongs to the universal ribosomal protein uL13 family. In terms of assembly, part of the 50S ribosomal subunit.

Its function is as follows. This protein is one of the early assembly proteins of the 50S ribosomal subunit, although it is not seen to bind rRNA by itself. It is important during the early stages of 50S assembly. The chain is Large ribosomal subunit protein uL13 from Micrococcus luteus (strain ATCC 4698 / DSM 20030 / JCM 1464 / CCM 169 / CCUG 5858 / IAM 1056 / NBRC 3333 / NCIMB 9278 / NCTC 2665 / VKM Ac-2230) (Micrococcus lysodeikticus).